The chain runs to 431 residues: Trigger factor (431 aa).

Positions 158-243 constitute a PPIase FKBP-type domain; that stretch reads GYLVALETWS…VIEVSEPVLL (86 aa).

The protein belongs to the FKBP-type PPIase family. Tig subfamily.

The protein localises to the cytoplasm. It carries out the reaction [protein]-peptidylproline (omega=180) = [protein]-peptidylproline (omega=0). In terms of biological role, involved in protein export. Acts as a chaperone by maintaining the newly synthesized protein in an open conformation. Functions as a peptidyl-prolyl cis-trans isomerase. This Xylella fastidiosa (strain M23) protein is Trigger factor.